Consider the following 312-residue polypeptide: Phosphoribosylglycinamide formyltransferase, chloroplastic (312 aa).

The transit peptide at 1–73 (MEAQQIISRF…EVCSSSWRIW (73 aa)) directs the protein to the chloroplast. 109–111 (GSN) is a N(1)-(5-phospho-beta-D-ribosyl)glycinamide binding site. (6R)-10-formyltetrahydrofolate contacts are provided by residues K162, 187 to 190 (LKLI), and N204. Residue H206 is the Proton donor of the active site. D247 is a binding site for (6R)-10-formyltetrahydrofolate. E276 provides a ligand contact to N(1)-(5-phospho-beta-D-ribosyl)glycinamide.

Belongs to the GART family.

Its subcellular location is the plastid. It is found in the chloroplast. It catalyses the reaction N(1)-(5-phospho-beta-D-ribosyl)glycinamide + (6R)-10-formyltetrahydrofolate = N(2)-formyl-N(1)-(5-phospho-beta-D-ribosyl)glycinamide + (6S)-5,6,7,8-tetrahydrofolate + H(+). It functions in the pathway purine metabolism; IMP biosynthesis via de novo pathway; N(2)-formyl-N(1)-(5-phospho-D-ribosyl)glycinamide from N(1)-(5-phospho-D-ribosyl)glycinamide (10-formyl THF route): step 1/1. The polypeptide is Phosphoribosylglycinamide formyltransferase, chloroplastic (PUR3) (Vigna unguiculata (Cowpea)).